The primary structure comprises 485 residues: 4-alpha-glucanotransferase (485 aa).

The protein belongs to the disproportionating enzyme family.

It localises to the cytoplasm. It catalyses the reaction Transfers a segment of a (1-&gt;4)-alpha-D-glucan to a new position in an acceptor, which may be glucose or a (1-&gt;4)-alpha-D-glucan.. In Aquifex aeolicus (strain VF5), this protein is 4-alpha-glucanotransferase (malQ).